Here is a 471-residue protein sequence, read N- to C-terminus: Glutamate--tRNA ligase 1 (471 aa).

A 'HIGH' region motif is present at residues 10 to 20; the sequence is PSPTGYLHIGG. Residues Cys99, Cys101, Cys126, and Asp128 each coordinate Zn(2+). The short motif at 238–242 is the 'KMSKS' region element; the sequence is RLSKR. Lys241 serves as a coordination point for ATP.

This sequence belongs to the class-I aminoacyl-tRNA synthetase family. Glutamate--tRNA ligase type 1 subfamily. As to quaternary structure, monomer. It depends on Zn(2+) as a cofactor.

Its subcellular location is the cytoplasm. It catalyses the reaction tRNA(Glu) + L-glutamate + ATP = L-glutamyl-tRNA(Glu) + AMP + diphosphate. Functionally, catalyzes the attachment of glutamate to tRNA(Glu) in a two-step reaction: glutamate is first activated by ATP to form Glu-AMP and then transferred to the acceptor end of tRNA(Glu). The polypeptide is Glutamate--tRNA ligase 1 (Alkalilimnicola ehrlichii (strain ATCC BAA-1101 / DSM 17681 / MLHE-1)).